The primary structure comprises 1401 residues: DNA-directed RNA polymerase subunit beta' (1401 aa).

Residues C70, C72, C85, and C88 each contribute to the Zn(2+) site. Residues D460, D462, and D464 each coordinate Mg(2+). The Zn(2+) site is built by C808, C882, C889, and C892.

The protein belongs to the RNA polymerase beta' chain family. As to quaternary structure, the RNAP catalytic core consists of 2 alpha, 1 beta, 1 beta' and 1 omega subunit. When a sigma factor is associated with the core the holoenzyme is formed, which can initiate transcription. The cofactor is Mg(2+). It depends on Zn(2+) as a cofactor.

It carries out the reaction RNA(n) + a ribonucleoside 5'-triphosphate = RNA(n+1) + diphosphate. In terms of biological role, DNA-dependent RNA polymerase catalyzes the transcription of DNA into RNA using the four ribonucleoside triphosphates as substrates. The chain is DNA-directed RNA polymerase subunit beta' from Legionella pneumophila (strain Corby).